A 204-amino-acid chain; its full sequence is UPF0637 protein SAS1041 (204 aa).

The protein belongs to the UPF0637 family.

The polypeptide is UPF0637 protein SAS1041 (Staphylococcus aureus (strain MSSA476)).